The chain runs to 503 residues: Secreted RxLR effector protein RXLR-C08 (503 aa).

Residues 1 to 22 (MRLCGVASAFLSTLILIAHIDA) form the signal peptide. N-linked (GlcNAc...) asparagine glycans are attached at residues Asn27, Asn35, and Asn45. The dEER signature appears at 57–60 (DEER). 3 N-linked (GlcNAc...) asparagine glycosylation sites follow: Asn108, Asn197, and Asn374.

This sequence belongs to the RxLR effector family.

It is found in the secreted. The protein localises to the host Golgi apparatus. Functionally, secreted effector that suppresses pattern-triggered immunity (PTI) in plant host. This is Secreted RxLR effector protein RXLR-C08 from Plasmopara halstedii (Downy mildew of sunflower).